The sequence spans 1101 residues: Error-prone DNA polymerase (1101 aa).

The disordered stretch occupies residues 1055-1101 (ADLGHPMDSAVGQTTPQTDSAPRPRPQPRAMHPREQAKRLFPSRDFH). Over residues 1065–1074 (VGQTTPQTDS) the composition is skewed to polar residues. A compositionally biased stretch (basic and acidic residues) spans 1086–1101 (HPREQAKRLFPSRDFH).

The protein belongs to the DNA polymerase type-C family. DnaE2 subfamily.

It localises to the cytoplasm. It catalyses the reaction DNA(n) + a 2'-deoxyribonucleoside 5'-triphosphate = DNA(n+1) + diphosphate. In terms of biological role, DNA polymerase involved in damage-induced mutagenesis and translesion synthesis (TLS). It is not the major replicative DNA polymerase. The sequence is that of Error-prone DNA polymerase from Ruegeria pomeroyi (strain ATCC 700808 / DSM 15171 / DSS-3) (Silicibacter pomeroyi).